We begin with the raw amino-acid sequence, 514 residues long: Maturase K (514 aa).

This sequence belongs to the intron maturase 2 family. MatK subfamily.

The protein resides in the plastid. The protein localises to the chloroplast. Functionally, usually encoded in the trnK tRNA gene intron. Probably assists in splicing its own and other chloroplast group II introns. The chain is Maturase K from Acer palmatum (Japanese maple).